The sequence spans 392 residues: Integrin-linked kinase-associated serine/threonine phosphatase 2C (392 aa).

Met1 carries the N-acetylmethionine modification. Positions 1–91 are disordered; the sequence is MDLFGDLPEP…PEEEKNGGEE (91 aa). Residues 31–40 show a composition bias toward low complexity; it reads DLPPTSSTDS. Polar residues predominate over residues 59-70; the sequence is SGSLATSGSQVV. The segment covering 72–91 has biased composition (basic and acidic residues); that stretch reads NEGKGAKRKAPEEEKNGGEE. One can recognise a PPM-type phosphatase domain in the interval 108-390; the sequence is KGYVAERKGE…DNVTVMVVRI (283 aa). Mn(2+)-binding residues include Asp152 and Gly153. The residue at position 210 (Lys210) is an N6-acetyllysine. 2 residues coordinate Mn(2+): Asp326 and Asp381.

The protein belongs to the PP2C family. In terms of assembly, interacts with ILK. Mg(2+) serves as cofactor. Mn(2+) is required as a cofactor. Widely expressed. Highest expression observed in kidney, liver and muscle.

The protein resides in the cytoplasm. The enzyme catalyses O-phospho-L-seryl-[protein] + H2O = L-seryl-[protein] + phosphate. It carries out the reaction O-phospho-L-threonyl-[protein] + H2O = L-threonyl-[protein] + phosphate. In terms of biological role, protein phosphatase that may play a role in regulation of cell cycle progression via dephosphorylation of its substrates whose appropriate phosphorylation states might be crucial for cell proliferation. Selectively associates with integrin linked kinase (ILK), to modulate cell adhesion and growth factor signaling. Inhibits the ILK-GSK3B signaling axis and may play an important role in inhibiting oncogenic transformation. This chain is Integrin-linked kinase-associated serine/threonine phosphatase 2C (Ilkap), found in Rattus norvegicus (Rat).